An 822-amino-acid polypeptide reads, in one-letter code: Structure-specific endonuclease subunit SLX4 (822 aa).

Disordered regions lie at residues M1–S39, T73–L117, G277–D362, R390–S418, K456–L507, and K589–S676. Over residues S13–S39 the composition is skewed to polar residues. The span at N280–K294 shows a compositional bias: low complexity. The span at V310 to Q320 shows a compositional bias: polar residues. Basic residues predominate over residues G342–N354. Residues S460–T470 show a composition bias toward low complexity. The segment covering N471–N484 has biased composition (polar residues). The segment covering S490–Q506 has biased composition (low complexity). Residues K589 to K612 show a composition bias toward polar residues. Residues T627 to Q636 show a composition bias toward basic residues. A compositionally biased stretch (low complexity) spans K637–A650.

This sequence belongs to the SLX4 family. Forms a heterodimer with SLX1. In terms of processing, phosphorylated in response to DNA damage.

The protein localises to the nucleus. Its function is as follows. Regulatory subunit of the SLX1-SLX4 structure-specific endonuclease that resolves DNA secondary structures generated during DNA repair and recombination. Has endonuclease activity towards branched DNA substrates, introducing single-strand cuts in duplex DNA close to junctions with ss-DNA. The polypeptide is Structure-specific endonuclease subunit SLX4 (Coccidioides immitis (strain RS) (Valley fever fungus)).